The sequence spans 159 residues: Large ribosomal subunit protein uL10 (159 aa).

The protein belongs to the universal ribosomal protein uL10 family. As to quaternary structure, part of the ribosomal stalk of the 50S ribosomal subunit. The N-terminus interacts with L11 and the large rRNA to form the base of the stalk. The C-terminus forms an elongated spine to which L12 dimers bind in a sequential fashion forming a multimeric L10(L12)X complex.

Functionally, forms part of the ribosomal stalk, playing a central role in the interaction of the ribosome with GTP-bound translation factors. This Nautilia profundicola (strain ATCC BAA-1463 / DSM 18972 / AmH) protein is Large ribosomal subunit protein uL10.